A 111-amino-acid chain; its full sequence is Rho GDP-dissociation inhibitor 1 (111 aa).

Residues K57 and K60 each participate in a glycyl lysine isopeptide (Lys-Gly) (interchain with G-Cter in SUMO1); alternate cross-link. Glycyl lysine isopeptide (Lys-Gly) (interchain with G-Cter in SUMO2); alternate cross-links involve residues K57 and K60. K60 bears the N6-acetyllysine; alternate mark. At K60 the chain carries N6-succinyllysine; alternate.

The protein belongs to the Rho GDI family. In terms of assembly, monomer. Interacts with FER. Interacts with PLXNB3. Forms a heterodimer with RAC1. Interacts with RHOA, the affinity is increased by three orders of magnitude when RHOA is prenylated. Interacts with PSMD10; the interaction increases ARHGDIA association with RHOA, leading to ARHGDIA-mediated inactivation of RHOA and ROCK and prolonged AKT activation. Interacts with KANK2; the interaction is direct and may regulate the interaction of ARHGDIA with RHOA, RAC1 and CDC42. Interacts with RHOC. Interacts with CDC42. Interacts with NGFR (via death domain); NGFR binding decreases the affinity for RHOA. In terms of processing, the N-terminus is blocked.

Its subcellular location is the cytoplasm. Functionally, controls Rho proteins homeostasis. Regulates the GDP/GTP exchange reaction of the Rho proteins by inhibiting the dissociation of GDP from them, and the subsequent binding of GTP to them. Retains Rho proteins such as CDC42, RAC1 and RHOA in an inactive cytosolic pool, regulating their stability and protecting them from degradation. Actively involved in the recycling and distribution of activated Rho GTPases in the cell, mediates extraction from membranes of both inactive and activated molecules due its exceptionally high affinity for prenylated forms. Through the modulation of Rho proteins, may play a role in cell motility regulation. In glioma cells, inhibits cell migration and invasion by mediating the signals of SEMA5A and PLXNB3 that lead to inactivation of RAC1. This is Rho GDP-dissociation inhibitor 1 (ARHGDIA) from Cavia porcellus (Guinea pig).